Consider the following 310-residue polypeptide: tRNA-cytidine(32) 2-sulfurtransferase (310 aa).

A PP-loop motif motif is present at residues 45 to 50; the sequence is SGGKDS. Cys120, Cys123, and Cys211 together coordinate [4Fe-4S] cluster.

The protein belongs to the TtcA family. As to quaternary structure, homodimer. Requires Mg(2+) as cofactor. [4Fe-4S] cluster serves as cofactor.

The protein localises to the cytoplasm. It carries out the reaction cytidine(32) in tRNA + S-sulfanyl-L-cysteinyl-[cysteine desulfurase] + AH2 + ATP = 2-thiocytidine(32) in tRNA + L-cysteinyl-[cysteine desulfurase] + A + AMP + diphosphate + H(+). Its pathway is tRNA modification. Catalyzes the ATP-dependent 2-thiolation of cytidine in position 32 of tRNA, to form 2-thiocytidine (s(2)C32). The sulfur atoms are provided by the cysteine/cysteine desulfurase (IscS) system. The sequence is that of tRNA-cytidine(32) 2-sulfurtransferase from Shewanella putrefaciens (strain CN-32 / ATCC BAA-453).